We begin with the raw amino-acid sequence, 202 residues long: Glycerol-3-phosphate acyltransferase (202 aa).

Transmembrane regions (helical) follow at residues 2-22, 54-74, 85-105, 120-140, 141-161, and 162-182; these read MIIVMLLLSYLIGAFPSGFVI, FLVTFLDIFKGFITVFFPLWL, FFTNGLIVGLFAILGHVYPVY, VVLGVNPILLLILAIIFFIVL, KIFKYVSLASIVAAICCVIGS, and LIIQDYILLVVSFLVSIILII.

The protein belongs to the PlsY family. As to quaternary structure, probably interacts with PlsX.

The protein localises to the cell membrane. It carries out the reaction an acyl phosphate + sn-glycerol 3-phosphate = a 1-acyl-sn-glycero-3-phosphate + phosphate. It participates in lipid metabolism; phospholipid metabolism. Its function is as follows. Catalyzes the transfer of an acyl group from acyl-phosphate (acyl-PO(4)) to glycerol-3-phosphate (G3P) to form lysophosphatidic acid (LPA). This enzyme utilizes acyl-phosphate as fatty acyl donor, but not acyl-CoA or acyl-ACP. This is Glycerol-3-phosphate acyltransferase from Staphylococcus aureus (strain Mu3 / ATCC 700698).